Reading from the N-terminus, the 226-residue chain is Protease RseP (226 aa).

A PDZ domain is found at 1–56; the sequence is VEKVIPGSAAEKAGLQKGDRIVKVGSQEIDVWHTFTSFVSNNPNVPLELSVDRAGH. 2 helical membrane passes run 152–174 and 202–221; these read LVYYLMFLALISVNLGIINLIPL and FSYRIGAMILVLLMGLALFN.

It belongs to the peptidase M50B family. As to quaternary structure, interacts with RseA. The cofactor is Zn(2+).

It localises to the cell inner membrane. In terms of biological role, a site-2 regulated intramembrane protease (S2P) that cleaves the peptide bond between 'Ala-108' and 'Cys-109' in the transmembrane region of RseA. Part of a regulated intramembrane proteolysis (RIP) cascade. Acts on DegS-cleaved RseA to release the cytoplasmic domain of RseA. This provides the cell with sigma-E (RpoE) activity through the proteolysis of RseA. The protein is Protease RseP (rseP) of Photorhabdus luminescens (Xenorhabdus luminescens).